We begin with the raw amino-acid sequence, 164 residues long: UPF0304 protein PC1_2778 (164 aa).

This sequence belongs to the UPF0304 family.

The polypeptide is UPF0304 protein PC1_2778 (Pectobacterium carotovorum subsp. carotovorum (strain PC1)).